The chain runs to 167 residues: MAISLATAYISPCFTPESSNSASPSRTLSSVRLPSQIRRFGSVQSPSSSTRFAPLTVRAAKKQTFNSFDDLLQNSDKPVLVDFYATWCGPCQLMVPILNEVSETLKDIIAVVKIDTEKYPSLANKYQIEALPTFILFKDGKLWDRFEGALPANQLVERIENSLQVKQ.

Residues 1 to 58 (MAISLATAYISPCFTPESSNSASPSRTLSSVRLPSQIRRFGSVQSPSSSTRFAPLTVR) constitute a chloroplast transit peptide. Residues 59 to 164 (AAKKQTFNSF…LVERIENSLQ (106 aa)) form the Thioredoxin domain. Catalysis depends on nucleophile residues Cys88 and Cys91. Cys88 and Cys91 form a disulfide bridge.

The protein belongs to the thioredoxin family. Plant Y-type subfamily. As to expression, expressed in leaves.

It is found in the plastid. Its subcellular location is the chloroplast stroma. Functionally, thiol-disulfide oxidoreductase that poorly activates chloroplastic malate dehydrogenase (NADP-MDH) and fructose-1,6-bisphosphatase. Provides reducing equivalents for peroxiredoxin Q. The sequence is that of Thioredoxin Y2, chloroplastic from Arabidopsis thaliana (Mouse-ear cress).